A 5588-amino-acid chain; its full sequence is Histone-lysine N-methyltransferase 2D (5588 aa).

Positions 1–61 (MDSQKPPAED…QKPPHDCSRG (61 aa)) are disordered. A C2HC pre-PHD-type 1; degenerate zinc finger spans residues 104-149 (GPCEAVLPKEDASQIGFPEGLTPAHLGEPGGHCWAHHWCAAWSAGV). 2 consecutive PHD-type zinc fingers follow at residues 170–218 (QRCS…PEHS) and 270–323 (CPEC…CRLC). The PHD-type 2; degenerate zinc-finger motif lies at 226–276 (EARCAVCEGPGQLCDLLFCTSCGHHYHGACLDTALTARKRASWQCPECKVC). An RING-type 1; atypical zinc finger spans residues 229 to 274 (CAVCEGPGQLCDLLFCTSCGHHYHGACLDTALTARKRASWQCPECK). The segment at 276 to 321 (CQSCRKPGNDSKMLVCETCDKGYHTFCLKPPMEDLPAHSWKCKTCR) adopts an RING-type 2; degenerate zinc-finger fold. Disordered regions lie at residues 438–908 (MPLL…SPII) and 922–1315 (LEYP…DDDT). The interval 439 to 642 (PLLPPPEESP…VSRLSPPPEE (204 aa)) is 15 X 5 AA repeats of S/P-P-P-E/P-E/A. The segment covering 440 to 463 (LLPPPEESPLSPPPEESPTSPPPE) has biased composition (pro residues). A run of 4 repeats spans residues 442–446 (PPPEE), 460–464 (PPPEA), 469–473 (PPTEE), and 477–481 (SPPPE). The span at 464–475 (ASRLSPPTEESP) shows a compositional bias: low complexity. 2 stretches are compositionally biased toward pro residues: residues 490-512 (GCPPSPALDTPLSPPPEASPLSP) and 519-560 (LSPP…PPPE). 4 repeat units span residues 520-524 (SPPPE), 529-533 (SPPPE), 538-542 (SPPPE), and 547-551 (SPPPE). Low complexity predominate over residues 561 to 572 (ASRLFPPFEESP). The segment covering 573–614 (LSPPPEDSPLSPPPEASRLSPPPEDSPMSPPPEDSPMSPPPE) has biased composition (pro residues). Repeat copies occupy residues 574–578 (SPPPE), 583–587 (SPPPE), 592–596 (SPPPE), and 610–614 (SPPPE). Positions 619 to 636 (LPLPVLSHLSPLPEVSRL) are enriched in low complexity. The stretch at 637–641 (SPPPE) is repeat 15. The segment covering 637–677 (SPPPEESPLSPPPEDSPASPPPEASRLSPPPEDSPASPPPE) has biased composition (pro residues). Over residues 696–712 (DSLVSLPMEESPLSPLP) the composition is skewed to low complexity. S727 is modified (phosphoserine). Low complexity-rich tracts occupy residues 735 to 755 (LCPQPEELPLSPQSEEPCLSP), 836 to 851 (PSQSSAPKELSLFSPS), and 876 to 893 (LPEELPLSLSGEPVLSPQ). Composition is skewed to pro residues over residues 894-908 (LMPPDPLPPPLSPII), 959-973 (EPVPPMILPPSPGSP), and 985-1012 (LPPPCSPLLPHSLPPPTPPPSHCSPPAL). The span at 1013 to 1023 (PLSVPSPLSPV) shows a compositional bias: low complexity. The segment covering 1033-1045 (AELHEMETDKGPE) has biased composition (basic and acidic residues). PHD-type zinc fingers lie at residues 1071–1124 (PSPA…PMEV), 1121–1171 (PMEV…SQGD), and 1198–1253 (LGVS…SPAR). At S1107 the chain carries Phosphoserine. Over residues 1163–1172 (EISNLSQGDA) the composition is skewed to polar residues. The RING-type 3; atypical zinc finger occupies 1201-1251 (STDVSPARDEGSLRLCTDSLPETDDSLLCDTGTATSGGKAEGDKGRRRSSP). At S1205 the chain carries Phosphoserine. T1223 is subject to Phosphothreonine. S1226 carries the phosphoserine modification. A compositionally biased stretch (basic residues) spans 1245–1258 (GRRRSSPARSRIKQ). At S1562 the chain carries Phosphoserine. 4 disordered regions span residues 1566 to 1721 (KRRQ…SKLE), 1751 to 1846 (GRPG…MESK), 1886 to 1962 (GLAL…SLQR), and 2095 to 2641 (SADG…QRQR). Residues 1593–1608 (PDDKKDGDLDTDDLLK) are compositionally biased toward basic and acidic residues. S1627 carries the post-translational modification Phosphoserine. Residues 1631 to 1641 (ELGKEETEESK) are compositionally biased toward basic and acidic residues. 2 stretches are compositionally biased toward basic residues: residues 1658–1668 (RQRKSHTRVKR) and 1709–1718 (KQQRRARKKS). The segment covering 1762-1782 (PRADGGSDRKELMTAMHKGDD) has biased composition (basic and acidic residues). S1791 is subject to Phosphoserine. T1822 carries the phosphothreonine modification. The span at 1831–1846 (DLDRIPTEELPKMESK) shows a compositional bias: basic and acidic residues. Composition is skewed to low complexity over residues 1886-1896 (GLALGSLPSSS) and 1936-1947 (TTPSTPTTPTTE). Residues 2151 to 2166 (PTYPPYPSPTGAPAQP) show a composition bias toward pro residues. Low complexity predominate over residues 2170 to 2181 (GTTTRPGTGQPG). At S2196 the chain carries Phosphoserine. Phosphothreonine is present on T2197. K2203 carries the post-translational modification N6-acetyllysine. S2217 and S2231 each carry phosphoserine. Over residues 2237-2249 (ESRKSLEVKKEEL) the composition is skewed to basic and acidic residues. Phosphoserine is present on residues S2266, S2268, and S2299. Composition is skewed to pro residues over residues 2308-2322 (EPPPAQALAPSPPSH) and 2331-2359 (YPDPYAQPPLTPRPQPPPPESCCAPPPRS). Residues 2366–2388 (SRVPASPQSQSSSQSPLTPRPLS) show a composition bias toward low complexity. Positions 2470 to 2486 (GQPTNFARSPGTGTFVG) are enriched in polar residues. R2492 is modified (asymmetric dimethylarginine). The span at 2504–2514 (LKPPVPQPGLP) shows a compositional bias: pro residues. Low complexity predominate over residues 2546–2557 (PSGSPLGPNSGP). Phosphoserine is present on S2597. Residues 2610 to 2622 (SSSSLATPELSSA) show a composition bias toward low complexity. The stretch at 2627–2665 (ISSLSQTELEKQRQRQRLRELLIRQQIQRNTLRQEKETA) forms a coiled coil. The LXXLL motif 1 motif lies at 2644–2648 (LRELL). The interval 2655–2806 (RNTLRQEKET…QLWQQQQQQQ (152 aa)) is disordered. Positions 2665 to 2680 (AAAAAGAVGPPGNWGA) are enriched in low complexity. 2 stretches are compositionally biased toward polar residues: residues 2691-2704 (SRGQTPFTGSQDRS) and 2739-2748 (PSSMDMNSRQ). Positions 2768–2813 (LQQQQQQQQQQQQQQQQQQQQQQQQQQQQQLWQQQQQQQQQQQQQA) form a coiled coil. Low complexity predominate over residues 2769–2806 (QQQQQQQQQQQQQQQQQQQQQQQQQQQQQLWQQQQQQQ). Position 2829 is an asymmetric dimethylarginine (R2829). An LXXLL motif 2 motif is present at residues 3030 to 3034 (LDDLL). The interval 3069-3104 (NEKAEREALLRGVEPVSLGPEERPPPAPDNSEPRLT) is disordered. K3071 carries the post-translational modification N6-acetyllysine. A phosphoserine mark is found at S3122 and S3193. 2 disordered regions span residues 3129-3193 (NTPK…LNPS) and 3271-3326 (QQQQ…QSMV). Positions 3271–3284 (QQQQQQQQQQQQQQ) are enriched in low complexity. Residue K3430 is modified to N6-acetyllysine. 4 disordered regions span residues 3460–3496 (SGGSGSDLQNHVAPGSGQERNAGDPAQPRPNPPTFAQ), 3593–3617 (RNKQQQQQQQQQQQQQQQHSAVLAV), 3633–3661 (LLPAHGLQPPQAPPGGQAGGLRLPPGGMV), and 3678–3704 (QQQQQHSGVAGSLTGPPGSFFPGNLAL). Residues 3559 to 3613 (EKLKLVTEQQSKIQKQLDQVRKQQKEHTNLMAEYRNKQQQQQQQQQQQQQQQHSA) are a coiled coil. Residues 3596 to 3610 (QQQQQQQQQQQQQQQ) are compositionally biased toward low complexity. Positions 3712-3747 (RLLQERQLQLQQQRMQLAQKLQQQQQQQQQQQQQQH) form a coiled coil. The residue at position 3725 (R3725) is an Asymmetric dimethylarginine. Disordered regions lie at residues 3760 to 3780 (PGVQNQALGPKPQGLLPPSNH) and 3808 to 3827 (LQQQQQQQQHSGALGPQGPH). 2 coiled-coil regions span residues 3854–3883 (RLLTAQQQQQQQQQQQQQQQQQQQQQQQQQ) and 3912–4052 (SLQQ…QVTL). The interval 4053-4249 (GPGLPVKPLQ…QGPPGAGVMP (197 aa)) is disordered. Low complexity-rich tracts occupy residues 4128-4159 (SQLLLVQSQAQSQATSVQLQPPLRLPGQPQPQ), 4172-4183 (GQQLGSGSSSES), and 4226-4240 (GSQPPKSGPAPQSGQ). At R4255 the chain carries Asymmetric dimethylarginine. Phosphoserine is present on S4272. An LXXLL motif 3 motif is present at residues 4279–4283 (LQALL). The tract at residues 4290 to 4452 (QSQAVRQTPP…SSLVPGHLDQ (163 aa)) is disordered. Residues 4294 to 4305 (VRQTPPFQEPGT) are compositionally biased toward polar residues. Low complexity predominate over residues 4307 to 4322 (PSPLQGLLGCQPQPGG). The LXXLL motif 4 motif lies at 4310–4314 (LQGLL). Positions 4379–4391 (QLPSPSAQLTPTH) are enriched in polar residues. Position 4410 is a phosphoserine (S4410). Residues 4432–4445 (DNLTEAQKPEQSSL) are compositionally biased toward polar residues. Residues 4514-4518 (LQKLL) carry the LXXLL motif 5 motif. K4516 is modified (N6-acetyllysine). 3 disordered regions span residues 4553–4596 (LQGT…EDGV), 4664–4716 (KNNL…EGAL), and 4729–4778 (AALP…QLGS). Residues 4670–4684 (PPTPPSSLPPTPPPS) are compositionally biased toward pro residues. S4789 is subject to Phosphoserine. K4807 participates in a covalent cross-link: Glycyl lysine isopeptide (Lys-Gly) (interchain with G-Cter in SUMO2). K4827 carries the N6-acetyllysine modification. The RING-type 4; degenerate zinc finger occupies 4829-4874 (KGSEVSVMLTVSAAAAKNLNGVMVAVAELLSMKIPNSYEVLFPDGP). Positions 4877 to 4908 (AGLEPKKGEAEGPGGKEKGLSGKGPDTGPDWL) are disordered. Residues 4879 to 4896 (LEPKKGEAEGPGGKEKGL) are compositionally biased toward basic and acidic residues. A Glycyl lysine isopeptide (Lys-Gly) (interchain with G-Cter in SUMO2) cross-link involves residue K4931. Residues 4956 to 5031 (QLSAPPPEEP…SEDSRPPRLK (76 aa)) form a disordered region. Residues 4959-4982 (APPPEEPSPPPSPLAPSPASPPAE) show a composition bias toward pro residues. Basic and acidic residues predominate over residues 5017 to 5027 (RPPEESEDSRP). The short motif at 5041 to 5045 (LRLLL) is the LXXLL motif 6 element. The C2HC pre-PHD-type 2 zinc finger occupies 5080–5120 (NRRCCFCHEEGDGATDGPARLLNLDLDLWVHLNCALWSTEV). A PHD-type 7 zinc finger spans residues 5141–5188 (TKCSLCQRTGATSSCNRMRCPNVYHFACAIRAKCMFFKDKTMLCPVHK). The 61-residue stretch at 5226–5286 (LHMFRVGGLV…CCYRCSISEN (61 aa)) folds into the FYR N-terminal domain. One can recognise an FYR C-terminal domain in the interval 5287 to 5372 (NGRPEFVIKV…ESCQNYLFRY (86 aa)). The short motif at 5388-5393 (GCARSE) is the WDR5 interaction motif (WIN) element. One can recognise an SET domain in the interval 5448–5564 (NNVYLARSRI…KGEELTYDYQ (117 aa)). S-adenosyl-L-methionine contacts are provided by residues Y5502 and 5525 to 5526 (NH). Zn(2+)-binding residues include C5528, C5576, C5578, and C5583. The Post-SET domain occupies 5572-5588 (HKIPCHCGAWNCRKWMN).

This sequence belongs to the class V-like SAM-binding methyltransferase superfamily. Histone-lysine methyltransferase family. TRX/MLL subfamily. Component of the MLL2 complex (also named ASCOM complex), at least composed of catalytic subunit KMT2D/MLL2, ASH2L, RBBP5, WDR5, NCOA6, DPY30, KDM6A, PAXIP1/PTIP, PAGR1 and alpha- and beta-tubulin. Forms a core complex with the evolutionary conserved subcomplex WRAD composed of WDR5, RBBP5, ASH2L/ASH2 and DPY30 subunits; WRAD differentially stimulates the methyltransferase activity. Interacts with ESR1; interaction is direct. Interacts (via WIN motif) with WDR5.

The protein resides in the nucleus. It carries out the reaction L-lysyl(4)-[histone H3] + S-adenosyl-L-methionine = N(6)-methyl-L-lysyl(4)-[histone H3] + S-adenosyl-L-homocysteine + H(+). Histone methyltransferase that catalyzes methyl group transfer from S-adenosyl-L-methionine to the epsilon-amino group of 'Lys-4' of histone H3 (H3K4). Part of chromatin remodeling machinery predominantly forms H3K4me1 methylation marks at active chromatin sites where transcription and DNA repair take place. Acts as a coactivator for estrogen receptor by being recruited by ESR1, thereby activating transcription. This chain is Histone-lysine N-methyltransferase 2D (Kmt2d), found in Mus musculus (Mouse).